Consider the following 256-residue polypeptide: uncharacterized protein (256 aa).

29-36 (GDDHSGKT) contacts ATP.

This is an uncharacterized protein from Saccharomyces cerevisiae (strain ATCC 204508 / S288c) (Baker's yeast).